A 190-amino-acid polypeptide reads, in one-letter code: Potassium-transporting ATPase KdpC subunit (190 aa).

Residues T10–G30 form a helical membrane-spanning segment.

It belongs to the KdpC family. The system is composed of three essential subunits: KdpA, KdpB and KdpC.

It localises to the cell inner membrane. Functionally, part of the high-affinity ATP-driven potassium transport (or Kdp) system, which catalyzes the hydrolysis of ATP coupled with the electrogenic transport of potassium into the cytoplasm. This subunit acts as a catalytic chaperone that increases the ATP-binding affinity of the ATP-hydrolyzing subunit KdpB by the formation of a transient KdpB/KdpC/ATP ternary complex. This is Potassium-transporting ATPase KdpC subunit from Escherichia coli O127:H6 (strain E2348/69 / EPEC).